Reading from the N-terminus, the 61-residue chain is DNA-directed RNA polymerase subunit Rpo6 (61 aa).

The protein belongs to the archaeal Rpo6/eukaryotic RPB6 RNA polymerase subunit family. In terms of assembly, part of the RNA polymerase complex.

Its subcellular location is the cytoplasm. It catalyses the reaction RNA(n) + a ribonucleoside 5'-triphosphate = RNA(n+1) + diphosphate. Functionally, DNA-dependent RNA polymerase (RNAP) catalyzes the transcription of DNA into RNA using the four ribonucleoside triphosphates as substrates. The polypeptide is DNA-directed RNA polymerase subunit Rpo6 (Methanothermobacter thermautotrophicus (strain ATCC 29096 / DSM 1053 / JCM 10044 / NBRC 100330 / Delta H) (Methanobacterium thermoautotrophicum)).